The chain runs to 228 residues: Ras-related protein Rab-33B (228 aa).

8 residues coordinate GTP: Asn-41, Val-42, Gly-43, Lys-44, Thr-45, Cys-46, Thr-60, and Thr-63. Thr-45 provides a ligand contact to Mg(2+). The Switch 1 motif lies at 54–66 (GRFPQRTEATIGV). Mg(2+)-binding residues include Thr-63 and Asp-86. The short motif at 87 to 106 (TAGQERFRKSMVQHYYRNVH) is the Switch 2 element. GTP contacts are provided by Gly-89, Asn-146, Lys-147, Asp-149, Ala-177, and Lys-178. S-geranylgeranyl cysteine attachment occurs at residues Cys-226 and Cys-228. At Cys-228 the chain carries Cysteine methyl ester.

The protein belongs to the small GTPase superfamily. Rab family. Interacts (GTP- and GDP-bound forms) with ATG16L1; the complex consists of a tetramer where two RAB33B molecules bind independently one molecule of the ATG16L1 homodimer; the interaction promotes ATG12-ATG5-ATG16L1 complex recruitment to phagophores. Interacts with ATG16L2; however interaction is approximately hundred times lower than for ATG16L1. Interacts with RIC1 (via C-terminus domain); the interaction is direct with a preference for RAB33B-GTP. Interacts with RGP1. Requires Mg(2+) as cofactor.

The protein resides in the golgi apparatus membrane. It is found in the golgi apparatus. Its subcellular location is the cis-Golgi network. It localises to the preautophagosomal structure membrane. The enzyme catalyses GTP + H2O = GDP + phosphate + H(+). Its activity is regulated as follows. Regulated by guanine nucleotide exchange factors (GEFs) which promote the exchange of bound GDP for free GTP. Regulated by GTPase activating proteins (GAPs) such as SGSM2 which increase the GTP hydrolysis activity. Inhibited by GDP dissociation inhibitors (GDIs). Its function is as follows. The small GTPases Rab are key regulators of intracellular membrane trafficking, from the formation of transport vesicles to their fusion with membranes. Rabs cycle between an inactive GDP-bound form and an active GTP-bound form that is able to recruit to membranes different sets of downstream effectors directly responsible for vesicle formation, movement, tethering and fusion. RAB33B acts, in coordination with RAB6A, to regulate intra-Golgi retrograde trafficking. Participates in autophagosome formation by recruiting the ATG12-ATG5-ATG16L1 complex to phagophores, probably in a nucleotide-independent manner. The sequence is that of Ras-related protein Rab-33B (RAB33B) from Gallus gallus (Chicken).